A 119-amino-acid chain; its full sequence is NADH-quinone oxidoreductase subunit A (119 aa).

A run of 3 helical transmembrane segments spans residues 9–29, 63–83, and 88–108; these read VLLFILVGIGVGVVPLLLGYV, LVAILFILFDLEIAFLFPWAV, and VGVTGFVAVLVFLAILVVGFA.

It belongs to the complex I subunit 3 family. As to quaternary structure, NDH-1 is composed of 14 different subunits. Subunits NuoA, H, J, K, L, M, N constitute the membrane sector of the complex.

The protein localises to the cell inner membrane. The enzyme catalyses a quinone + NADH + 5 H(+)(in) = a quinol + NAD(+) + 4 H(+)(out). NDH-1 shuttles electrons from NADH, via FMN and iron-sulfur (Fe-S) centers, to quinones in the respiratory chain. The immediate electron acceptor for the enzyme in this species is believed to be ubiquinone. Couples the redox reaction to proton translocation (for every two electrons transferred, four hydrogen ions are translocated across the cytoplasmic membrane), and thus conserves the redox energy in a proton gradient. In Acidovorax sp. (strain JS42), this protein is NADH-quinone oxidoreductase subunit A.